Reading from the N-terminus, the 83-residue chain is MASGWGITGNKGRCYDFWMDFSECMSHCREPKDCTLLREDYLECLHHSKEFQRRNRIYKEEQRKLRAASRKGEETGDGTHTHH.

Residues 11-52 (KGRCYDFWMDFSECMSHCREPKDCTLLREDYLECLHHSKEFQ) form the CHCH domain. 2 short sequence motifs (cx9C motif) span residues 14 to 24 (CYDFWMDFSEC) and 34 to 44 (CTLLREDYLEC). Disulfide bonds link Cys-14-Cys-44 and Cys-24-Cys-34. The segment at 62-83 (QRKLRAASRKGEETGDGTHTHH) is disordered.

It belongs to the complex I NDUFS5 subunit family. In terms of assembly, complex I is composed of at least 49 different subunits. This is a component of the iron-sulfur (IP) fragment of the enzyme.

Its subcellular location is the mitochondrion. The protein resides in the mitochondrion inner membrane. It localises to the mitochondrion intermembrane space. Its function is as follows. Accessory subunit of the mitochondrial membrane respiratory chain NADH dehydrogenase (Complex I), that is believed not to be involved in catalysis. Complex I functions in the transfer of electrons from NADH to the respiratory chain. The immediate electron acceptor for the enzyme is believed to be ubiquinone. The protein is NADH dehydrogenase [ubiquinone] iron-sulfur protein 5-B of Arabidopsis thaliana (Mouse-ear cress).